The following is a 428-amino-acid chain: Serine--tRNA ligase (428 aa).

231 to 233 (TSE) serves as a coordination point for L-serine. ATP contacts are provided by residues 262–264 (RRE) and V278. E285 contacts L-serine. Position 349 to 352 (349 to 352 (ELTS)) interacts with ATP. T384 is an L-serine binding site.

Belongs to the class-II aminoacyl-tRNA synthetase family. Type-1 seryl-tRNA synthetase subfamily. In terms of assembly, homodimer. The tRNA molecule binds across the dimer.

The protein resides in the cytoplasm. The enzyme catalyses tRNA(Ser) + L-serine + ATP = L-seryl-tRNA(Ser) + AMP + diphosphate + H(+). The catalysed reaction is tRNA(Sec) + L-serine + ATP = L-seryl-tRNA(Sec) + AMP + diphosphate + H(+). It functions in the pathway aminoacyl-tRNA biosynthesis; selenocysteinyl-tRNA(Sec) biosynthesis; L-seryl-tRNA(Sec) from L-serine and tRNA(Sec): step 1/1. In terms of biological role, catalyzes the attachment of serine to tRNA(Ser). Is also able to aminoacylate tRNA(Sec) with serine, to form the misacylated tRNA L-seryl-tRNA(Sec), which will be further converted into selenocysteinyl-tRNA(Sec). This Bifidobacterium adolescentis (strain ATCC 15703 / DSM 20083 / NCTC 11814 / E194a) protein is Serine--tRNA ligase.